The chain runs to 56 residues: Light-harvesting protein B-880 beta chain (56 aa).

At 1–22 (AEIDRPVSLSGLTEGEAREFHG) the chain is on the cytoplasmic side. The a bacteriochlorophyll site is built by H21 and H39. A helical transmembrane segment spans residues 23–45 (VFMTSFMVFIAVAIVAHILAWMW). At 46–56 (RPWIPGPEGYA) the chain is on the periplasmic side.

This sequence belongs to the antenna complex beta subunit family. As to quaternary structure, the core complex is formed by different alpha and beta chains, binding bacteriochlorophyll molecules, and arranged most probably in tetrameric structures disposed around the reaction center. The non-pigmented gamma chains may constitute additional components.

The protein resides in the cell inner membrane. Its function is as follows. Antenna complexes are light-harvesting systems, which transfer the excitation energy to the reaction centers. This Afifella marina (Rhodobium marinum) protein is Light-harvesting protein B-880 beta chain.